A 326-amino-acid polypeptide reads, in one-letter code: Flap endonuclease 1 (326 aa).

Positions 1-98 (MGVQFNDSIP…KTREERRKVK (98 aa)) are N-domain. Mg(2+) contacts are provided by Asp27, Asp80, Glu152, Glu154, Asp173, Asp175, and Asp224. The tract at residues 116 to 245 (DMQKYAKRIN…KKALTIIKNK (130 aa)) is I-domain. An interaction with PCNA region spans residues 318-326 (SQTSLDSWF).

Belongs to the XPG/RAD2 endonuclease family. FEN1 subfamily. In terms of assembly, interacts with PCNA. PCNA stimulates the nuclease activity without altering cleavage specificity. It depends on Mg(2+) as a cofactor.

Functionally, structure-specific nuclease with 5'-flap endonuclease and 5'-3' exonuclease activities involved in DNA replication and repair. During DNA replication, cleaves the 5'-overhanging flap structure that is generated by displacement synthesis when DNA polymerase encounters the 5'-end of a downstream Okazaki fragment. Binds the unpaired 3'-DNA end and kinks the DNA to facilitate 5' cleavage specificity. Cleaves one nucleotide into the double-stranded DNA from the junction in flap DNA, leaving a nick for ligation. Also involved in the base excision repair (BER) pathway. Acts as a genome stabilization factor that prevents flaps from equilibrating into structures that lead to duplications and deletions. Also possesses 5'-3' exonuclease activity on nicked or gapped double-stranded DNA. The sequence is that of Flap endonuclease 1 from Methanococcus aeolicus (strain ATCC BAA-1280 / DSM 17508 / OCM 812 / Nankai-3).